The primary structure comprises 993 residues: Nisin biosynthesis protein NisB (993 aa).

Residues 838 to 851 (AIFCADSKIIPNLL) traverse the membrane as a helical segment.

To B.subtilis SpaB and S.epidermidis EpiB.

It is found in the cell membrane. In terms of biological role, involved in the post-translational modification of the lantibiotic nisin. The protein is Nisin biosynthesis protein NisB (nisB) of Lactococcus lactis subsp. lactis (Streptococcus lactis).